The chain runs to 802 residues: Protein enabled homolog (802 aa).

The 111-residue stretch at 1 to 111 (MSEQSICQAR…SAMMHALEVL (111 aa)) folds into the WH1 domain. Residues 143 to 155 (NSQLPAQVQNGPS) show a composition bias toward polar residues. The tract at residues 143–166 (NSQLPAQVQNGPSQEELEIQRRQL) is disordered. S144 carries the post-translational modification Phosphoserine. A coiled-coil region spans residues 154–258 (PSQEELEIQR…ERERRMSNAA (105 aa)). Tandem repeats lie at residues 175–179 (LERER), 180–184 (MERER), 185–189 (LERER), 190–194 (LERER), 195–199 (LERER), 200–204 (LEQEQ), and 205–209 (LERQR). The interval 175–209 (LERERMERERLERERLERERLERERLEQEQLERQR) is 7 X 5 AA tandem repeats of [LM]-E-[QR]-[EQ]-[QR]. Basic and acidic residues predominate over residues 245–254 (QVEWERERRM). Disordered stretches follow at residues 245–287 (QVEW…PSYA) and 341–622 (ATVP…RPLT). At S255 the chain carries Phosphoserine; by PKA. Over residues 255–278 (SNAAPSSDSSLSSAPLPEYSSCQP) the composition is skewed to low complexity. The span at 348 to 361 (NKNSRPSSPVNTPS) shows a compositional bias: polar residues. Phosphoserine is present on S383. Residues 386–410 (IMISSPPGKATGPRPVLPVCVSSPV) are compositionally biased toward low complexity. The segment covering 431–464 (VSPPPTSGPAAPPPPPPPPPPPPPPPLPPPPLPP) has biased composition (pro residues). The segment covering 485 to 505 (STPSSKPSVLPSPSAGAPASA) has biased composition (low complexity). Over residues 525-535 (AASQPAESPTP) the composition is skewed to polar residues. The segment covering 542-553 (PPAPPPPPPLPS) has biased composition (pro residues). A Phosphotyrosine modification is found at Y557. Residues 561-605 (LPPPPGPPPPPPLPSTGPPPPPPPPPPLPNQAPPPPPPPPAPPLP) show a composition bias toward pro residues. An EVH2 block A region spans residues 623–643 (GLAAAIAGAKLRKVSRVEDGS). The interval 623–799 (GLAAAIAGAK…DAIRQELSKS (177 aa)) is EVH2. The KLKR motif lies at 632–635 (KLRK). 2 disordered regions span residues 639–675 (VEDGSFPGGGNTGSVSLASSKADAGRGNGPLPLGGSG) and 691–764 (AEKG…TEGL). The span at 664–675 (RGNGPLPLGGSG) shows a compositional bias: gly residues. The interval 674–691 (SGLMEEMSALLARRRRIA) is EVH2 block B. Positions 731 to 760 (RTNTMNGSKSPVISRPKSTPSSQPSANGVQ) are enriched in polar residues. 2 positions are modified to phosphoserine: S738 and S740. The tract at residues 765–799 (DYDRLKQDILDEMRKELAKLKEELIDAIRQELSKS) is EVH2 block C. The stretch at 767-797 (DRLKQDILDEMRKELAKLKEELIDAIRQELS) forms a coiled coil.

It belongs to the Ena/VASP family. In terms of assembly, homotetramer. Interacts with APBB1IP, APBB1, PFN1 and ROBO4. Isoforms, containing the polyproline-rich regions with PPLP motifs, bind the WW domain of APBB1IP. Isoforms, containing the PPSY motif, bind, in vitro, to the WW2 and WW3 domains of NEDD4 and to the WW1 domain of YAP1. Binds the SH3 domain of BAIAP2-alpha but only after the autoinhibitory region of BAIAP2-alpha has been blocked by interaction with CDC42. Interacts, via the EVH1/WH1 domain, with the Pro-rich domains from VCL, ZYX and Listeria monocytogenes actA and with TES (via LIM domain). The TES LIM domain and the Pro-rich domains from VCL or ZYX compete for the same binding site. Interaction with ZYX is important for targeting ENAH to focal adhesions and enhances production of actin-rich structures at the apical surface of cells. Binds GPHN. Heterotrimer with TES and ACTL7A. Interacts with FAT1 (via EVH1 domains). Interacts, through the Pro-rich region, with the C-terminal SH3 domain of DNMPB. Interacts with PRPF40A. NTN1-induced PKA phosphorylation on Ser-255 directly parallels the formation of filopodial protrusions. Expressed in heart and testis, lower levels in lung, skeletal muscle, kidney, pancreas and brain. Isoform 5 is expressed exclusively in the brain. Isoform 2 is expressed predominantly in brain, testis, ovary and fat. In the brain, isoforms 2 and 5 are expressed at highest levels in the hippocampus, cortex and midbrain, and at lowest levels in the striatum and cerebellum. Isoform 6 is expressed in brain and spleen.

It is found in the cytoplasm. It localises to the cytoskeleton. The protein localises to the cell projection. The protein resides in the lamellipodium. Its subcellular location is the filopodium. It is found in the synapse. It localises to the cell junction. The protein localises to the focal adhesion. In terms of biological role, ena/VASP proteins are actin-associated proteins involved in a range of processes dependent on cytoskeleton remodeling and cell polarity such as axon guidance and lamellipodial and filopodial dynamics in migrating cells. ENAH induces the formation of F-actin rich outgrowths in fibroblasts. Acts synergistically with BAIAP2-alpha and downstream of NTN1 to promote filipodia formation. The polypeptide is Protein enabled homolog (Enah) (Mus musculus (Mouse)).